The chain runs to 208 residues: MRNVTAAGRNVDEAVQSGLQELGLTKDKVEITVIEEGNKGFLGIFGKKPAIVKLVEKIDPIQQAKLYLQTIAEAIAGKSDVTVQESKKTVRYHITGEKAALLIGKRGQTLNALETLTQLALNRYPGQYKNVTVDAENYRLKRKETLSQLAIKLADQVLKTKKSIQLEPMPSSERKIIHDTLSGYANHQIKTYSMGEGENRHLVISHKR.

The jag_N domain stretch occupies residues 5–55; it reads TAAGRNVDEAVQSGLQELGLTKDKVEITVIEEGNKGFLGIFGKKPAIVKLV. The 78-residue stretch at 58–135 folds into the KH domain; that stretch reads IDPIQQAKLY…GQYKNVTVDA (78 aa). Positions 140 to 208 constitute an R3H domain; the sequence is LKRKETLSQL…NRHLVISHKR (69 aa).

This sequence belongs to the KhpB RNA-binding protein family. Forms a complex with KhpA.

The protein localises to the cytoplasm. Functionally, a probable RNA chaperone. Forms a complex with KhpA which binds to cellular RNA and controls its expression. Plays a role in peptidoglycan (PG) homeostasis and cell length regulation. In Bacillus subtilis (strain 168), this protein is RNA-binding protein KhpB.